The sequence spans 1510 residues: Chromosome partition protein MukB (1510 aa).

Gly75–Ser82 serves as a coordination point for ATP. The stretch at Gln346 to Gln706 forms a coiled coil. A flexible hinge region spans residues Pro707–Arg824. Coiled coils occupy residues Glu825–Val1154 and Ile1248–Ile1304.

Belongs to the SMC family. MukB subfamily. As to quaternary structure, homodimerization via its hinge domain. Binds to DNA via its C-terminal region. Interacts, and probably forms a ternary complex, with MukE and MukF via its C-terminal region. The complex formation is stimulated by calcium or magnesium. Interacts with tubulin-related protein FtsZ.

It is found in the cytoplasm. The protein localises to the nucleoid. Plays a central role in chromosome condensation, segregation and cell cycle progression. Functions as a homodimer, which is essential for chromosome partition. Involved in negative DNA supercoiling in vivo, and by this means organize and compact chromosomes. May achieve or facilitate chromosome segregation by condensation DNA from both sides of a centrally located replisome during cell division. The protein is Chromosome partition protein MukB of Haemophilus influenzae (strain ATCC 51907 / DSM 11121 / KW20 / Rd).